The following is a 391-amino-acid chain: NAD(P)H-quinone oxidoreductase subunit H, chloroplastic (391 aa).

It belongs to the complex I 49 kDa subunit family. NDH is composed of at least 16 different subunits, 5 of which are encoded in the nucleus.

It localises to the plastid. The protein resides in the chloroplast thylakoid membrane. The catalysed reaction is a plastoquinone + NADH + (n+1) H(+)(in) = a plastoquinol + NAD(+) + n H(+)(out). It carries out the reaction a plastoquinone + NADPH + (n+1) H(+)(in) = a plastoquinol + NADP(+) + n H(+)(out). In terms of biological role, NDH shuttles electrons from NAD(P)H:plastoquinone, via FMN and iron-sulfur (Fe-S) centers, to quinones in the photosynthetic chain and possibly in a chloroplast respiratory chain. The immediate electron acceptor for the enzyme in this species is believed to be plastoquinone. Couples the redox reaction to proton translocation, and thus conserves the redox energy in a proton gradient. The protein is NAD(P)H-quinone oxidoreductase subunit H, chloroplastic of Nephroselmis olivacea (Green alga).